The sequence spans 366 residues: Homer protein homolog 1 (366 aa).

An N-acetylglycine modification is found at Gly-2. Residues 2-110 form the WH1 domain; that stretch reads GEQPIFSTRA…EKFQEFKEAA (109 aa). The tract at residues 114-189 is disordered; sequence KEKSQEKMEL…RTQALSHASS (76 aa). 2 stretches are compositionally biased toward polar residues: residues 138-147 and 155-170; these read SPLTPESING and DVTQ…TQNA. Residues 193–364 adopt a coiled-coil conformation; that stretch reads KHWEAELATL…LRDNLAKLLE (172 aa). The tract at residues 302–366 is required for tetramerization; that stretch reads KLQEVEIRNK…DNLAKLLECS (65 aa). Ser-318 is subject to Phosphoserine.

This sequence belongs to the Homer family. As to quaternary structure, tetramer; this tetrameric structure is critical for forming the high-order complex with SHANK1, which in turn is necessary for the structural and functional integrity of dendritic spines. Isoform 1, isoform 2 and isoform 3 encode a coiled-coil structure that mediates homo- and heteromultimerization. Interacts with GRM1, GRM5, ITPR1, DNM3, RYR1, RYR2 and SHANK3. Interacts with IFT57 and OPHN1. Interacts with SHANK1; forms high-order polymerized complex with a mesh-like network structure, at least composed of SHANK1, HOMER1 and DLGAP1; the complex formation is SHANK1 multimerization dependent. Interacts with NFATC4. Interacts with DAGLA (via PPXXF motif); this interaction is required for the cell membrane localization of DAGLA. Interacts with SRGAP2. Expressed in skeletal muscle at the level of the Z line, in the forebrain and cerebellum. In terms of tissue distribution, expressed in cardiac and skeletal muscle. As to expression, expressed in the hippocampus. Expressed in skeletal muscle at the level of the Z line, in the heart, forebrain and cerebellum.

It is found in the cytoplasm. The protein localises to the postsynaptic density. The protein resides in the synapse. Its subcellular location is the cell projection. It localises to the dendritic spine. Postsynaptic density scaffolding protein. Binds and cross-links cytoplasmic regions of GRM1, GRM5, ITPR1, DNM3, RYR1, RYR2, SHANK1 and SHANK3. By physically linking GRM1 and GRM5 with ER-associated ITPR1 receptors, it aids the coupling of surface receptors to intracellular calcium release. May also couple GRM1 to PI3 kinase through its interaction with AGAP2. Isoform 1 regulates the trafficking and surface expression of GRM5. Differentially regulates the functions of the calcium activated channel ryanodine receptors RYR1 and RYR2. Isoform 1 decreases the activity of RYR2, and increases the activity of RYR1, whereas isoform 5 counteracts the effects by competing for binding sites. Isoform 3 regulates the trafficking and surface expression of GRM5. Isoform 5 acts as a natural dominant negative, in dynamic competition with constitutively expressed isoform 1, isoform 2 and isoform 3 to regulate synaptic metabotropic glutamate function. Isoform 5, may be involved in the structural changes that occur at synapses during long-lasting neuronal plasticity and development. Forms a high-order complex with SHANK1, which in turn is necessary for the structural and functional integrity of dendritic spines. Negatively regulates T cell activation by inhibiting the calcineurin-NFAT pathway. Acts by competing with calcineurin/PPP3CA for NFAT protein binding, hence preventing NFAT activation by PPP3CA. The polypeptide is Homer protein homolog 1 (Mus musculus (Mouse)).